The chain runs to 261 residues: Hemin import ATP-binding protein HmuV (261 aa).

The region spanning 7-243 (LRGQNLSLQF…EIIDAVYGYK (237 aa)) is the ABC transporter domain. Residue 39–46 (GPNGAGKS) coordinates ATP.

The protein belongs to the ABC transporter superfamily. Heme (hemin) importer (TC 3.A.1.14.5) family. In terms of assembly, the complex is composed of two ATP-binding proteins (HmuV), two transmembrane proteins (HmuU) and a solute-binding protein (HmuT).

It localises to the cell inner membrane. Its function is as follows. Part of the ABC transporter complex HmuTUV involved in hemin import. Responsible for energy coupling to the transport system. The protein is Hemin import ATP-binding protein HmuV of Vibrio vulnificus (strain CMCP6).